We begin with the raw amino-acid sequence, 214 residues long: tRNA (guanine-N(7)-)-methyltransferase (214 aa).

S-adenosyl-L-methionine is bound by residues Glu43, Glu68, Asp95, and Asp117. Residue Asp117 is part of the active site. Substrate-binding positions include Lys121, Asp153, and 190–193 (TEYE).

It belongs to the class I-like SAM-binding methyltransferase superfamily. TrmB family.

It catalyses the reaction guanosine(46) in tRNA + S-adenosyl-L-methionine = N(7)-methylguanosine(46) in tRNA + S-adenosyl-L-homocysteine. Its pathway is tRNA modification; N(7)-methylguanine-tRNA biosynthesis. Catalyzes the formation of N(7)-methylguanine at position 46 (m7G46) in tRNA. This Staphylococcus aureus (strain USA300) protein is tRNA (guanine-N(7)-)-methyltransferase.